The sequence spans 223 residues: Keratin-associated protein 5-4 (223 aa).

14 consecutive repeat copies span residues 21–24 (CCKP), 27–30 (CCVP), 79–82 (CCKP), 89–92 (CCKP), 107–110 (CCKP), 117–120 (CCKP), 135–138 (CCKP), 145–148 (CCKP), 155–158 (CCKP), 173–176 (CCKP), 183–186 (CCKP), 193–196 (CCKP), 203–206 (CCKP), and 213–216 (CCAP). Residues 21 to 216 (CCKPVCCCVP…CCCQSSCCAP (196 aa)) are 14 X 4 AA repeats of C-C-X-P.

This sequence belongs to the KRTAP type 5 family. As to quaternary structure, interacts with hair keratins. In terms of tissue distribution, expressed during the active phases of the hair cycle in the medulla and the inner root sheath of the forming hair. Also expressed in the upper layers of the epidermis of skin.

Functionally, in the hair cortex, hair keratin intermediate filaments are embedded in an interfilamentous matrix, consisting of hair keratin-associated protein (KRTAP), which are essential for the formation of a rigid and resistant hair shaft through their extensive disulfide bond cross-linking with abundant cysteine residues of hair keratins. The matrix proteins include the high-sulfur and high-glycine-tyrosine keratins. The chain is Keratin-associated protein 5-4 from Mus musculus (Mouse).